A 679-amino-acid polypeptide reads, in one-letter code: Translation initiation factor IF-2 (679 aa).

The tr-type G domain maps to 178–347; it reads KRPPIITVMG…LLTSEMQELK (170 aa). Residues 187 to 194 are G1; sequence GHVDHGKT. Residue 187–194 participates in GTP binding; sequence GHVDHGKT. The segment at 212–216 is G2; that stretch reads GITQH. Residues 233–236 form a G3 region; that stretch reads DTPG. GTP contacts are provided by residues 233–237 and 287–290; these read DTPGH and NKMD. Residues 287 to 290 form a G4 region; the sequence is NKMD. Residues 323–325 are G5; sequence SAK.

This sequence belongs to the TRAFAC class translation factor GTPase superfamily. Classic translation factor GTPase family. IF-2 subfamily.

It localises to the cytoplasm. In terms of biological role, one of the essential components for the initiation of protein synthesis. Protects formylmethionyl-tRNA from spontaneous hydrolysis and promotes its binding to the 30S ribosomal subunits. Also involved in the hydrolysis of GTP during the formation of the 70S ribosomal complex. This chain is Translation initiation factor IF-2, found in Clostridium perfringens (strain ATCC 13124 / DSM 756 / JCM 1290 / NCIMB 6125 / NCTC 8237 / Type A).